Consider the following 272-residue polypeptide: Bis(5'-nucleosyl)-tetraphosphatase, symmetrical (272 aa).

It belongs to the Ap4A hydrolase family.

The catalysed reaction is P(1),P(4)-bis(5'-adenosyl) tetraphosphate + H2O = 2 ADP + 2 H(+). Functionally, hydrolyzes diadenosine 5',5'''-P1,P4-tetraphosphate to yield ADP. The polypeptide is Bis(5'-nucleosyl)-tetraphosphatase, symmetrical (Ectopseudomonas mendocina (strain ymp) (Pseudomonas mendocina)).